Reading from the N-terminus, the 155-residue chain is NADPH-dependent 7-cyano-7-deazaguanine reductase (155 aa).

The Thioimide intermediate role is filled by C52. D59 functions as the Proton donor in the catalytic mechanism. Substrate contacts are provided by residues 74–76 and 93–94; these read VES and HE.

Belongs to the GTP cyclohydrolase I family. QueF type 1 subfamily.

The protein localises to the cytoplasm. It carries out the reaction 7-aminomethyl-7-carbaguanine + 2 NADP(+) = 7-cyano-7-deazaguanine + 2 NADPH + 3 H(+). It functions in the pathway tRNA modification; tRNA-queuosine biosynthesis. Its function is as follows. Catalyzes the NADPH-dependent reduction of 7-cyano-7-deazaguanine (preQ0) to 7-aminomethyl-7-deazaguanine (preQ1). The sequence is that of NADPH-dependent 7-cyano-7-deazaguanine reductase from Syntrophobacter fumaroxidans (strain DSM 10017 / MPOB).